Reading from the N-terminus, the 101-residue chain is MAKISSVERNKKRERMAAQFAARRAKLKAIANNREASPEERFEASLKLAELPRNSAKIRVRLRCEVTGRSRGNYRKFKLCRNKLRELASQGQIPGMVKSSW.

The protein belongs to the universal ribosomal protein uS14 family. Part of the 30S ribosomal subunit. Contacts proteins S3 and S10.

In terms of biological role, binds 16S rRNA, required for the assembly of 30S particles and may also be responsible for determining the conformation of the 16S rRNA at the A site. The polypeptide is Small ribosomal subunit protein uS14 (Paramagnetospirillum magneticum (strain ATCC 700264 / AMB-1) (Magnetospirillum magneticum)).